Here is a 415-residue protein sequence, read N- to C-terminus: uncharacterized protein (415 aa).

In terms of domain architecture, TRAM spans 1-55 (MSTGTVTIDRLGAQGDGVARTEAGPVFAPFTLPGETVSLAVNKANGTLISLKEAS). Residues Cys63, Cys75, Cys78, and Cys152 each coordinate [4Fe-4S] cluster. Residues Gln252, Phe279, Glu299, and Asp347 each coordinate S-adenosyl-L-methionine. Cys373 functions as the Nucleophile in the catalytic mechanism.

It belongs to the class I-like SAM-binding methyltransferase superfamily. RNA M5U methyltransferase family.

This is an uncharacterized protein from Rhizobium meliloti (strain 1021) (Ensifer meliloti).